The sequence spans 908 residues: UPF0182 protein Csac_0864 (908 aa).

7 helical membrane-spanning segments follow: residues 22–42 (FVIS…DLFL), 62–82 (FYVK…VFFV), 98–118 (ISLL…ALIA), 166–186 (FLFY…IVLY), 208–228 (HIFF…KYEM), 253–273 (YFRL…YFFI), and 286–306 (SYIG…YFVV).

Belongs to the UPF0182 family.

It localises to the cell membrane. The chain is UPF0182 protein Csac_0864 from Caldicellulosiruptor saccharolyticus (strain ATCC 43494 / DSM 8903 / Tp8T 6331).